Consider the following 549-residue polypeptide: Glucose-6-phosphate isomerase (549 aa).

E355 (proton donor) is an active-site residue. Residues H386 and K514 contribute to the active site.

It belongs to the GPI family.

The protein resides in the cytoplasm. The catalysed reaction is alpha-D-glucose 6-phosphate = beta-D-fructose 6-phosphate. The protein operates within carbohydrate biosynthesis; gluconeogenesis. It functions in the pathway carbohydrate degradation; glycolysis; D-glyceraldehyde 3-phosphate and glycerone phosphate from D-glucose: step 2/4. Functionally, catalyzes the reversible isomerization of glucose-6-phosphate to fructose-6-phosphate. The chain is Glucose-6-phosphate isomerase from Pectobacterium carotovorum subsp. carotovorum (strain PC1).